The chain runs to 199 residues: MSEKPEKIVLASGNAGKLEEFGNLFKPYSITVLPQSAFGIPECPEPYPTFVENALAKARHAAKYSGLPALADDSGICAAALNGAPGIHSARYAGDNPKSDTANNLKLAAELVGKADKSCCYVCVLVFVRHKDDPRPIIAEGVWHGQWNDTPLGQNGFGYDPYFYLPEHGKTAAELDTEVKNRESHRAQALAELLRKLAL.

Substrate is bound at residue 12–17; that stretch reads SGNAGK. The active-site Proton acceptor is D73. Residue D73 coordinates Mg(2+). Residues S74, 157–160, K180, and 185–186 contribute to the substrate site; these read FGYD and HR.

The protein belongs to the HAM1 NTPase family. In terms of assembly, homodimer. It depends on Mg(2+) as a cofactor.

It carries out the reaction XTP + H2O = XMP + diphosphate + H(+). It catalyses the reaction dITP + H2O = dIMP + diphosphate + H(+). The catalysed reaction is ITP + H2O = IMP + diphosphate + H(+). Pyrophosphatase that catalyzes the hydrolysis of nucleoside triphosphates to their monophosphate derivatives, with a high preference for the non-canonical purine nucleotides XTP (xanthosine triphosphate), dITP (deoxyinosine triphosphate) and ITP. Seems to function as a house-cleaning enzyme that removes non-canonical purine nucleotides from the nucleotide pool, thus preventing their incorporation into DNA/RNA and avoiding chromosomal lesions. The protein is dITP/XTP pyrophosphatase of Neisseria meningitidis serogroup B (strain ATCC BAA-335 / MC58).